A 407-amino-acid polypeptide reads, in one-letter code: Peptidase T (407 aa).

Histidine 77 contributes to the Zn(2+) binding site. Aspartate 79 is an active-site residue. Aspartate 138 is a Zn(2+) binding site. The active-site Proton acceptor is glutamate 172. Zn(2+)-binding residues include glutamate 173, aspartate 195, and histidine 377.

The protein belongs to the peptidase M20B family. Zn(2+) serves as cofactor.

The protein localises to the cytoplasm. It catalyses the reaction Release of the N-terminal residue from a tripeptide.. In terms of biological role, cleaves the N-terminal amino acid of tripeptides. The polypeptide is Peptidase T (Aeromonas hydrophila subsp. hydrophila (strain ATCC 7966 / DSM 30187 / BCRC 13018 / CCUG 14551 / JCM 1027 / KCTC 2358 / NCIMB 9240 / NCTC 8049)).